Reading from the N-terminus, the 1642-residue chain is Cortactin-binding protein 2 (1642 aa).

Disordered stretches follow at residues 1–27 (MATD…AEAA), 203–222 (KKKT…RSTE), 366–433 (IGAS…HPGL), 446–471 (GSNA…SPTS), and 491–611 (RFTS…PSID). Residues 119 to 276 (RKMQERMSTQ…EQLKRGTDSK (158 aa)) adopt a coiled-coil conformation. The segment covering 385–394 (GPSTGSTADL) has biased composition (polar residues). A compositionally biased stretch (low complexity) spans 395-407 (TSSPTPVPSTVSP). At arginine 491 the chain carries Asymmetric dimethylarginine. The span at 497-506 (AGAPPRPGAP) shows a compositional bias: pro residues. Residues 576–586 (TVASPPSTLPQ) show a composition bias toward polar residues. 6 ANK repeats span residues 702-732 (GRPT…DINY), 736-765 (DGHS…QVNV), 769-798 (NGFT…NINH), 802-831 (GGQT…DRSV), 835-864 (DGWT…PAHG), and 904-934 (EGWT…EPER). Positions 1440-1469 (ESGAWRKVSTSPRKKSGRFSSPTWNKPDLS) are disordered. Serine 1513 is subject to Phosphoserine. Residues 1546–1642 (RRFDSSGNNP…NSRDLEPTQK (97 aa)) form a disordered region. 2 stretches are compositionally biased toward polar residues: residues 1552 to 1563 (GNNPVFSATVNN) and 1571 to 1588 (KEVS…SNSK). Residues 1613-1627 (SQNTKRSSSSSNTRQ) are compositionally biased toward low complexity.

Interacts with CTTN/cortactin SH3 domain. Interacts with STRN, STRN4/zinedin and MOB4/phocein; this interactions mediate the association with the STRIPAK core complex and may regulate dendritic spine distribution of the STRIPAK complex in hippocampal neurons. Activation of glutamate receptors weakens the interaction with STRN and STRN4.

The protein localises to the cytoplasm. It is found in the cell cortex. Its subcellular location is the cell projection. The protein resides in the dendritic spine. In terms of biological role, regulates the dendritic spine distribution of CTTN/cortactin in hippocampal neurons, and thus controls dendritic spinogenesis and dendritic spine maintenance. Associates with the striatin-interacting phosphatase and kinase (STRIPAK) core complex to regulate dendritic spine distribution of the STRIPAK complex in hippocampal neurons. The polypeptide is Cortactin-binding protein 2 (CTTNBP2) (Muntiacus reevesi (Reeves' muntjac)).